A 368-amino-acid chain; its full sequence is tRNA/tmRNA (uracil-C(5))-methyltransferase (368 aa).

S-adenosyl-L-methionine contacts are provided by glutamine 192, tyrosine 220, asparagine 225, glutamate 241, and aspartate 301. Residue cysteine 326 is the Nucleophile of the active site. The active-site Proton acceptor is the glutamate 360.

This sequence belongs to the class I-like SAM-binding methyltransferase superfamily. RNA M5U methyltransferase family. TrmA subfamily.

The catalysed reaction is uridine(54) in tRNA + S-adenosyl-L-methionine = 5-methyluridine(54) in tRNA + S-adenosyl-L-homocysteine + H(+). It carries out the reaction uridine(341) in tmRNA + S-adenosyl-L-methionine = 5-methyluridine(341) in tmRNA + S-adenosyl-L-homocysteine + H(+). Dual-specificity methyltransferase that catalyzes the formation of 5-methyluridine at position 54 (m5U54) in all tRNAs, and that of position 341 (m5U341) in tmRNA (transfer-mRNA). This chain is tRNA/tmRNA (uracil-C(5))-methyltransferase, found in Actinobacillus pleuropneumoniae serotype 7 (strain AP76).